We begin with the raw amino-acid sequence, 505 residues long: Cholesteryl ester transfer protein (505 aa).

The signal sequence occupies residues 1-24 (MLWAGGMRLGMARILLMLVHAAAA). Residues asparagine 68 and asparagine 114 are each glycosylated (N-linked (GlcNAc...) asparagine). A disulfide bond links cysteine 169 and cysteine 210. Asparagine 266, asparagine 344, and asparagine 422 each carry an N-linked (GlcNAc...) asparagine glycan.

This sequence belongs to the BPI/LBP/Plunc superfamily. BPI/LBP family. As to expression, highly expressed in liver brain, heart, and spleen. Secreted in plasma.

It localises to the secreted. The enzyme catalyses cholesteryl (9Z-octadecenoate)(in) = cholesteryl (9Z-octadecenoate)(out). It catalyses the reaction 1,2,3-tri-(9Z-octadecenoyl)-glycerol(in) = 1,2,3-tri-(9Z-octadecenoyl)-glycerol(out). It carries out the reaction cholesteryl (9Z,12Z)-octadecadienoate(in) = cholesteryl (9Z,12Z)-octadecadienoate(out). Involved in the transfer of neutral lipids, including cholesteryl ester and triglyceride, among lipoprotein particles. Allows the net movement of cholesteryl ester from high density lipoproteins/HDL to triglyceride-rich very low density lipoproteins/VLDL, and the equimolar transport of triglyceride from VLDL to HDL. Regulates the reverse cholesterol transport, by which excess cholesterol is removed from peripheral tissues and returned to the liver for elimination. In Gallus gallus (Chicken), this protein is Cholesteryl ester transfer protein.